A 269-amino-acid chain; its full sequence is Ribosomal RNA small subunit methyltransferase A (269 aa).

S-adenosyl-L-methionine contacts are provided by Asn-18, Leu-20, Gly-45, Glu-66, Asp-91, and Asn-112.

Belongs to the class I-like SAM-binding methyltransferase superfamily. rRNA adenine N(6)-methyltransferase family. RsmA subfamily.

It localises to the cytoplasm. It catalyses the reaction adenosine(1518)/adenosine(1519) in 16S rRNA + 4 S-adenosyl-L-methionine = N(6)-dimethyladenosine(1518)/N(6)-dimethyladenosine(1519) in 16S rRNA + 4 S-adenosyl-L-homocysteine + 4 H(+). Specifically dimethylates two adjacent adenosines (A1518 and A1519) in the loop of a conserved hairpin near the 3'-end of 16S rRNA in the 30S particle. May play a critical role in biogenesis of 30S subunits. This Shewanella loihica (strain ATCC BAA-1088 / PV-4) protein is Ribosomal RNA small subunit methyltransferase A.